Reading from the N-terminus, the 281-residue chain is uncharacterized protein (281 aa).

The next 3 membrane-spanning stretches (helical) occupy residues 23–45, 65–87, and 94–116; these read LLLSYIINLISSIIILIIGFFAA, IANFLAALVRYIIITFALIASLG, and TSVIAILGAAGMAIGLALQGSLS.

This sequence belongs to the MscS (TC 1.A.23) family.

Its subcellular location is the cell membrane. This is an uncharacterized protein from Buchnera aphidicola subsp. Baizongia pistaciae (strain Bp).